Here is a 464-residue protein sequence, read N- to C-terminus: Argininosuccinate lyase (464 aa).

Belongs to the lyase 1 family. Argininosuccinate lyase subfamily.

The protein resides in the cytoplasm. The catalysed reaction is 2-(N(omega)-L-arginino)succinate = fumarate + L-arginine. It functions in the pathway amino-acid biosynthesis; L-arginine biosynthesis; L-arginine from L-ornithine and carbamoyl phosphate: step 3/3. The chain is Argininosuccinate lyase from Frankia casuarinae (strain DSM 45818 / CECT 9043 / HFP020203 / CcI3).